A 94-amino-acid polypeptide reads, in one-letter code: Neutrophil defensin 3 (94 aa).

Positions 1–19 (MRTLAILAAILLVALQAQA) are cleaved as a signal peptide. The propeptide occupies 20–38 (EPLQARADEVAAAPEQIAA). Disulfide bonds link C66–C94, C68–C83, and C73–C93.

The protein belongs to the alpha-defensin family. In terms of assembly, dimer. As to quaternary structure, (Microbial infection) Interacts with herpes virus 1 HHV-1 envelope glycoprotein B; this interaction inhibits viral infection.

The protein resides in the secreted. Functionally, effector molecule of the innate immune system that acts via antibiotic-like properties against a broad array of infectious agents including bacteria, fungi, and viruses. Possesses the ability to neutralize bacterial toxins such as B.anthracis lethal factor, Clostridium difficile cytotoxin B as well as leukocidin produced by Staphylococcus aureus. Also blocks herpes simplex virus infection by interacting with envelope glycoprotein B and thus preventing its binding to heparan sulfate, the receptor for attachment. The polypeptide is Neutrophil defensin 3 (DEFA3) (Homo sapiens (Human)).